Here is a 103-residue protein sequence, read N- to C-terminus: Leukocyte cysteine proteinase inhibitor 1 (103 aa).

M1 is subject to Blocked amino end (Met); partial. The interval 1–20 (MESEEMLAGGLTEPRPATPE) is disordered. The Secondary area of contact motif lies at 51-55 (QVVAG).

The protein belongs to the cystatin family.

The protein localises to the cytoplasm. In terms of biological role, potent inhibitor of cathepsins L and S, and papain. The chain is Leukocyte cysteine proteinase inhibitor 1 from Sus scrofa (Pig).